The following is a 74-amino-acid chain: U6-agatoxin-Ao1a (74 aa).

The N-terminal stretch at 1-19 is a signal peptide; it reads MRFYIAFFFLLLAADMALS. A propeptide spanning residues 20–30 is cleaved from the precursor; that stretch reads FEIGNSEELER. Cystine bridges form between Cys44-Cys56, Cys49-Cys61, and Cys55-Cys72.

Expressed by the venom gland.

It localises to the secreted. In Agelena orientalis (Funnel-web spider), this protein is U6-agatoxin-Ao1a.